Reading from the N-terminus, the 91-residue chain is Cell division protein FtsB (91 aa).

Topologically, residues 1-3 (MKW) are cytoplasmic. A helical transmembrane segment spans residues 4–21 (LVAVLVVFVAMFQYRLWV). The Periplasmic segment spans residues 22–91 (GEGSIADVVR…ETFFMIIDDQ (70 aa)). The stretch at 23-63 (EGSIADVVRLEREIARQEADNERLRERNKQLAAEVDALKTG) forms a coiled coil.

It belongs to the FtsB family. In terms of assembly, part of a complex composed of FtsB, FtsL and FtsQ.

The protein localises to the cell inner membrane. Functionally, essential cell division protein. May link together the upstream cell division proteins, which are predominantly cytoplasmic, with the downstream cell division proteins, which are predominantly periplasmic. This Teredinibacter turnerae (strain ATCC 39867 / T7901) protein is Cell division protein FtsB.